A 375-amino-acid polypeptide reads, in one-letter code: Tyrosine--tRNA ligase (375 aa).

Positions 37, 168, 172, 175, and 190 each coordinate L-tyrosine. The short motif at 251-255 (KMSKS) is the 'KMSKS' region element. K254 contributes to the ATP binding site.

The protein belongs to the class-I aminoacyl-tRNA synthetase family. TyrS type 4 subfamily. In terms of assembly, homodimer.

It localises to the cytoplasm. It carries out the reaction tRNA(Tyr) + L-tyrosine + ATP = L-tyrosyl-tRNA(Tyr) + AMP + diphosphate + H(+). Functionally, catalyzes the attachment of tyrosine to tRNA(Tyr) in a two-step reaction: tyrosine is first activated by ATP to form Tyr-AMP and then transferred to the acceptor end of tRNA(Tyr). This chain is Tyrosine--tRNA ligase, found in Thermococcus sibiricus (strain DSM 12597 / MM 739).